The primary structure comprises 355 residues: Phosphoribosylformylglycinamidine cyclo-ligase (355 aa).

It belongs to the AIR synthase family.

The protein resides in the cytoplasm. The catalysed reaction is 2-formamido-N(1)-(5-O-phospho-beta-D-ribosyl)acetamidine + ATP = 5-amino-1-(5-phospho-beta-D-ribosyl)imidazole + ADP + phosphate + H(+). The protein operates within purine metabolism; IMP biosynthesis via de novo pathway; 5-amino-1-(5-phospho-D-ribosyl)imidazole from N(2)-formyl-N(1)-(5-phospho-D-ribosyl)glycinamide: step 2/2. This chain is Phosphoribosylformylglycinamidine cyclo-ligase, found in Hamiltonella defensa subsp. Acyrthosiphon pisum (strain 5AT).